Here is a 578-residue protein sequence, read N- to C-terminus: Avenacosidase 2 (578 aa).

Residues 1-57 (MALLCSALSNSTHPSFRSHIAGANSENLWHLSAHPAQKSKRRCNLTLSSRAAARISS) constitute a chloroplast transit peptide. A beta-D-glucoside-binding positions include Gln89, His193, and 238-239 (NE). The Proton donor role is filled by Glu239. Cys258 and Cys264 form a disulfide bridge. A beta-D-glucoside contacts are provided by residues Tyr381, Glu454, Trp504, 511-512 (EW), and Phe520. Glu454 acts as the Nucleophile in catalysis.

It belongs to the glycosyl hydrolase 1 family. In terms of assembly, heteromultimer with P60A in a 1:1 stoichiometry. Aggregates to form the fibrillar stromacentre.

Its subcellular location is the plastid. It is found in the chloroplast stroma. The catalysed reaction is avenacoside B + H2O = 26-desgluco-avenacoside B + D-glucose. Functionally, beta-glucosidase acting as a preformed defense system. Hydrolyzes the bisdesmosides avenacosides A and B to 26-desgluco-avenacosides exhibiting fungicidal activity. Can use beta-fucoside &gt; beta-glucoside &gt; beta-galactoside &gt; beta-xyloside as substrates, but not alpha-glycosides, beta-thioglucosides and disaccharides. The protein is Avenacosidase 2 (P60B) of Avena sativa (Oat).